Here is a 435-residue protein sequence, read N- to C-terminus: Glutamate-1-semialdehyde 2,1-aminomutase (435 aa).

K266 is modified (N6-(pyridoxal phosphate)lysine).

Belongs to the class-III pyridoxal-phosphate-dependent aminotransferase family. HemL subfamily. As to quaternary structure, homodimer. Pyridoxal 5'-phosphate serves as cofactor.

The protein localises to the cytoplasm. The enzyme catalyses (S)-4-amino-5-oxopentanoate = 5-aminolevulinate. It participates in porphyrin-containing compound metabolism; protoporphyrin-IX biosynthesis; 5-aminolevulinate from L-glutamyl-tRNA(Glu): step 2/2. The chain is Glutamate-1-semialdehyde 2,1-aminomutase from Coxiella burnetii (strain CbuG_Q212) (Coxiella burnetii (strain Q212)).